The primary structure comprises 648 residues: Chaperone protein HtpG (648 aa).

An a; substrate-binding region spans residues 1-349 (MTTEHAAGAQ…SSDLPLNVSR (349 aa)). Residues 350–570 (EILQESKDID…EHDVGMNLAR (221 aa)) are b. The c stretch occupies residues 571 to 648 (ILKAAGQQAP…MAMGGSAGTD (78 aa)).

This sequence belongs to the heat shock protein 90 family. In terms of assembly, homodimer.

The protein resides in the cytoplasm. Functionally, molecular chaperone. Has ATPase activity. In Aromatoleum aromaticum (strain DSM 19018 / LMG 30748 / EbN1) (Azoarcus sp. (strain EbN1)), this protein is Chaperone protein HtpG.